Here is a 65-residue protein sequence, read N- to C-terminus: MPKLKTRKAAAKRFKATGTGKFMRRRAFHNHLLDHKSPKLKRHLKTKAVVDERDAENVRLMLPYA.

It belongs to the bacterial ribosomal protein bL35 family.

The polypeptide is Large ribosomal subunit protein bL35 (Prochlorococcus marinus (strain NATL1A)).